We begin with the raw amino-acid sequence, 301 residues long: tRNA dimethylallyltransferase 1 (301 aa).

Glycine 11–threonine 18 contributes to the ATP binding site. Threonine 13–threonine 18 lines the substrate pocket. Residues aspartate 36 to glutamine 39 form an interaction with substrate tRNA region.

The protein belongs to the IPP transferase family. In terms of assembly, monomer. It depends on Mg(2+) as a cofactor.

The catalysed reaction is adenosine(37) in tRNA + dimethylallyl diphosphate = N(6)-dimethylallyladenosine(37) in tRNA + diphosphate. Its function is as follows. Catalyzes the transfer of a dimethylallyl group onto the adenine at position 37 in tRNAs that read codons beginning with uridine, leading to the formation of N6-(dimethylallyl)adenosine (i(6)A). The protein is tRNA dimethylallyltransferase 1 of Bacteroides fragilis (strain YCH46).